The primary structure comprises 441 residues: Trigger factor (441 aa).

Residues Gly-163–Ala-248 form the PPIase FKBP-type domain.

Belongs to the FKBP-type PPIase family. Tig subfamily.

It localises to the cytoplasm. The catalysed reaction is [protein]-peptidylproline (omega=180) = [protein]-peptidylproline (omega=0). In terms of biological role, involved in protein export. Acts as a chaperone by maintaining the newly synthesized protein in an open conformation. Functions as a peptidyl-prolyl cis-trans isomerase. The polypeptide is Trigger factor (Jannaschia sp. (strain CCS1)).